Consider the following 437-residue polypeptide: Glutamate-1-semialdehyde 2,1-aminomutase (437 aa).

Lys-277 carries the post-translational modification N6-(pyridoxal phosphate)lysine.

Belongs to the class-III pyridoxal-phosphate-dependent aminotransferase family. HemL subfamily. Homodimer. Pyridoxal 5'-phosphate is required as a cofactor.

The protein localises to the cytoplasm. It catalyses the reaction (S)-4-amino-5-oxopentanoate = 5-aminolevulinate. Its pathway is porphyrin-containing compound metabolism; protoporphyrin-IX biosynthesis; 5-aminolevulinate from L-glutamyl-tRNA(Glu): step 2/2. The protein operates within porphyrin-containing compound metabolism; chlorophyll biosynthesis. This Thermosynechococcus vestitus (strain NIES-2133 / IAM M-273 / BP-1) protein is Glutamate-1-semialdehyde 2,1-aminomutase.